A 322-amino-acid polypeptide reads, in one-letter code: Lignin-forming anionic peroxidase (322 aa).

The signal sequence occupies residues 1–27; the sequence is MNTPTQSFRAKAAIFSLLLLSCMQCHA. Glutamine 28 bears the Pyrrolidone carboxylic acid mark. 4 disulfide bridges follow: cysteine 38–cysteine 118, cysteine 71–cysteine 76, cysteine 124–cysteine 318, and cysteine 203–cysteine 229. Histidine 69 acts as the Proton acceptor in catalysis. Ca(2+) is bound by residues aspartate 70, valine 73, glycine 75, aspartate 77, and serine 79. Proline 166 lines the substrate pocket. Histidine 196 contributes to the heme b binding site. Threonine 197 serves as a coordination point for Ca(2+). An N-linked (GlcNAc...) asparagine glycan is attached at asparagine 213. Positions 242, 245, and 250 each coordinate Ca(2+).

This sequence belongs to the peroxidase family. Classical plant (class III) peroxidase subfamily. It depends on Ca(2+) as a cofactor. Heme b serves as cofactor. As to expression, mesophyll protoplasts and to a much lesser extent, roots and germinating seeds.

It localises to the secreted. It carries out the reaction 2 a phenolic donor + H2O2 = 2 a phenolic radical donor + 2 H2O. In terms of biological role, removal of H(2)O(2), oxidation of toxic reductants, biosynthesis and degradation of lignin, suberization, auxin catabolism, response to environmental stresses such as wounding, pathogen attack and oxidative stress. These functions might be dependent on each isozyme/isoform in each plant tissue. Functionally, plays an integral role in secondary cell wall biosynthesis by the polymerization of cinnamyl alcohols into lignin and by forming rigid cross-links between cellulose, pectin, hydroxy-proline-rich glycoproteins, and lignin. The sequence is that of Lignin-forming anionic peroxidase from Nicotiana sylvestris (Wood tobacco).